A 109-amino-acid chain; its full sequence is uncharacterized protein (109 aa).

A helical transmembrane segment spans residues 90-107 (IICNFWGSLLGVGIAFYQ).

The protein resides in the membrane. This is an uncharacterized protein from Saccharomyces cerevisiae (strain ATCC 204508 / S288c) (Baker's yeast).